Consider the following 168-residue polypeptide: Cofilin-1-A (168 aa).

A2 carries the post-translational modification N-acetylalanine. One can recognise an ADF-H domain in the interval 4-153; that stretch reads GVMVSDDVIK…NDPCNLADKL (150 aa). Residues 30 to 34 carry the Nuclear localization signal motif; sequence KKRKK.

It belongs to the actin-binding proteins ADF family. Inactive when phosphorylated. Phosphorylation levels vary during development. Oocytes contain only the phosphorylated form, and 80-95% of cfl1 protein is phosphorylated in unfertilized eggs. Rapid dephosphorylation occurs within 30 minutes after fertilization. Phosphorylation levels increase again between the morula and blastula stages (5-8 hpf) and then decrease again as gastrulation approaches. Dephosphorylated by pdxp. In terms of tissue distribution, expressed diffusely in both animal and vegetal hemispheres of the oocyte. During cleavage, expression accumulates around the cleavage furrow, along the vegetal membrane, and later in the midbody. Strongly expressed in the animal hemisphere during blastula stages, with most cells showing expression by gastrulation. By stage 17, expression is highest in cells of the developing neuroectoderm, and at stage 24 the notochord, neural tube, neural crest, somites and some cells of the archenteron show high expression. By stage 35, expression has declined in the notochord, but remains in the neural tube, epidermis and a layer of cells in the archenteron. Also highly expressed in the retina and neuronal cell bodies at the base of the cement gland but not the cement gland itself. At stage 38, expression is widespread, being highest in the nervous system and retina. In the adult, expression is high in the brain, heart, oocyte, stomach, and low in skeletal muscle.

It is found in the nucleus matrix. It localises to the cytoplasm. The protein resides in the cytoskeleton. The protein localises to the cell cortex. Its subcellular location is the membrane. Its function is as follows. May play a role in the regulation of cell morphology and cytoskeletal organization. Binds to F-actin and exhibits pH-sensitive F-actin depolymerizing activity. Required for formation of the cleavage furrow during cytokinesis. The polypeptide is Cofilin-1-A (cfl1-a) (Xenopus laevis (African clawed frog)).